We begin with the raw amino-acid sequence, 287 residues long: Inorganic pyrophosphatase (287 aa).

Position 79 (Arg-79) interacts with diphosphate. Positions 116, 121, and 153 each coordinate Mg(2+).

This sequence belongs to the PPase family. It depends on Mg(2+) as a cofactor.

Its subcellular location is the cytoplasm. It catalyses the reaction diphosphate + H2O = 2 phosphate + H(+). This is Inorganic pyrophosphatase (IPP1) from Candida glabrata (strain ATCC 2001 / BCRC 20586 / JCM 3761 / NBRC 0622 / NRRL Y-65 / CBS 138) (Yeast).